The sequence spans 131 residues: Small ribosomal subunit protein bS6 (131 aa).

A disordered region spans residues 98–131 (EASPMVKAKDERRERREDFANETADDSEAGDSEE). Residues 104–116 (KAKDERRERREDF) show a composition bias toward basic and acidic residues. Over residues 120–131 (TADDSEAGDSEE) the composition is skewed to acidic residues.

The protein belongs to the bacterial ribosomal protein bS6 family.

Functionally, binds together with bS18 to 16S ribosomal RNA. This is Small ribosomal subunit protein bS6 from Klebsiella pneumoniae subsp. pneumoniae (strain ATCC 700721 / MGH 78578).